Reading from the N-terminus, the 325-residue chain is MQTSLLKPKIIAVESLGESHAKVVMEPFERGYGHTLGNALRRVLLSSMVGYAPTEVTIAGVVHEYSTLDGVQEDVVNLLLNLKGVVFKLHNRDEVTVTLRKEGEGVVTAGDIELAHDCEVINPDHVIAHLSKGGKLDVQIKVEKGRGYVPGNVRRYGEESAKIIGRIVLDASFSPVRRVSYAVESARVEQRTDLDKLVMNIETNGVISPEEAIRQSARILVDQLSVFAALEGTEAAAEAPSRAPQIDPILLRPVDDLELTVRSANCLKAENIYYIGDLIQRTENELLKTPNLGRKSLNEIKEVLASRGLTLGMKLENWPPAGLDK.

Residues 1 to 231 (MQTSLLKPKI…DQLSVFAALE (231 aa)) form an alpha N-terminal domain (alpha-NTD) region. Residues 246 to 325 (IDPILLRPVD…ENWPPAGLDK (80 aa)) are alpha C-terminal domain (alpha-CTD).

This sequence belongs to the RNA polymerase alpha chain family. Homodimer. The RNAP catalytic core consists of 2 alpha, 1 beta, 1 beta' and 1 omega subunit. When a sigma factor is associated with the core the holoenzyme is formed, which can initiate transcription.

The enzyme catalyses RNA(n) + a ribonucleoside 5'-triphosphate = RNA(n+1) + diphosphate. Its function is as follows. DNA-dependent RNA polymerase catalyzes the transcription of DNA into RNA using the four ribonucleoside triphosphates as substrates. The sequence is that of DNA-directed RNA polymerase subunit alpha from Paraburkholderia phymatum (strain DSM 17167 / CIP 108236 / LMG 21445 / STM815) (Burkholderia phymatum).